The chain runs to 554 residues: Hydroxylamine reductase (554 aa).

Cys-3, Cys-6, Cys-18, and Cys-25 together coordinate [2Fe-2S] cluster. His-252, Glu-276, Cys-320, Cys-408, Cys-436, Cys-461, Glu-495, and Lys-497 together coordinate hybrid [4Fe-2O-2S] cluster. Cys-408 carries the post-translational modification Cysteine persulfide.

This sequence belongs to the HCP family. [2Fe-2S] cluster is required as a cofactor. Requires hybrid [4Fe-2O-2S] cluster as cofactor.

The protein resides in the cytoplasm. The enzyme catalyses A + NH4(+) + H2O = hydroxylamine + AH2 + H(+). Catalyzes the reduction of hydroxylamine to form NH(3) and H(2)O. This is Hydroxylamine reductase from Shewanella baltica (strain OS185).